The following is an 865-amino-acid chain: Xylosyltransferase 2 (865 aa).

Residues 1–15 (MVASARVQKLVRRYK) are Cytoplasmic-facing. The helical; Signal-anchor for type II membrane protein transmembrane segment at 16 to 36 (LAIATALAILLLQGLVVWSFS) threads the bilayer. Residues 37–865 (GLEEDEPGEK…GPVKADGRLR (829 aa)) are Lumenal-facing. The interval 39–157 (EEDEPGEKGR…EGAPQPTDNG (119 aa)) is disordered. Residues 53–65 (RPLDPGEGSKDTD) are compositionally biased toward basic and acidic residues. Residues 73–82 (SAGRRHGRWR) are compositionally biased toward basic residues. N-linked (GlcNAc...) asparagine glycosylation is present at Asn-122. Residues 125 to 137 (GAAAGEALVGAAG) show a composition bias toward low complexity. Cystine bridges form between Cys-162-Cys-190, Cys-206-Cys-448, Cys-467-Cys-480, and Cys-469-Cys-478. Residues Val-239, Asp-267, and 296 to 298 (TIW) contribute to the UDP-alpha-D-xylose site. N-linked (GlcNAc...) asparagine glycosylation is present at Asn-327. 400 to 401 (DW) serves as a coordination point for UDP-alpha-D-xylose. UDP-alpha-D-xylose-binding positions include Ser-481 and 504 to 505 (RK). 2 disulfide bridges follow: Cys-581–Cys-833 and Cys-826–Cys-839. Asn-683 carries N-linked (GlcNAc...) asparagine glycosylation.

This sequence belongs to the glycosyltransferase 14 family. XylT subfamily. As to quaternary structure, monomer. Mg(2+) is required as a cofactor. It depends on Mn(2+) as a cofactor. In terms of processing, contains disulfide bonds.

Its subcellular location is the golgi apparatus membrane. The protein resides in the secreted. It carries out the reaction UDP-alpha-D-xylose + L-seryl-[protein] = 3-O-(beta-D-xylosyl)-L-seryl-[protein] + UDP + H(+). It participates in glycan metabolism; chondroitin sulfate biosynthesis. Its pathway is glycan metabolism; heparan sulfate biosynthesis. Its function is as follows. Catalyzes the first step in the biosynthesis of chondroitin sulfate, heparan sulfate and dermatan sulfate proteoglycans, such as DCN. Transfers D-xylose from UDP-D-xylose to specific serine residues of the core protein. The chain is Xylosyltransferase 2 (XYLT2) from Canis lupus familiaris (Dog).